Reading from the N-terminus, the 272-residue chain is Putative imidazole glycerol phosphate synthase subunit hisF2 (272 aa).

D133 is a catalytic residue.

The protein belongs to the HisA/HisF family. As to quaternary structure, heterodimer of HisH and HisF.

It is found in the cytoplasm. It carries out the reaction 5-[(5-phospho-1-deoxy-D-ribulos-1-ylimino)methylamino]-1-(5-phospho-beta-D-ribosyl)imidazole-4-carboxamide + L-glutamine = D-erythro-1-(imidazol-4-yl)glycerol 3-phosphate + 5-amino-1-(5-phospho-beta-D-ribosyl)imidazole-4-carboxamide + L-glutamate + H(+). It participates in amino-acid biosynthesis; L-histidine biosynthesis; L-histidine from 5-phospho-alpha-D-ribose 1-diphosphate: step 5/9. Functionally, IGPS catalyzes the conversion of PRFAR and glutamine to IGP, AICAR and glutamate. The HisF subunit catalyzes the cyclization activity that produces IGP and AICAR from PRFAR using the ammonia provided by the HisH subunit. The polypeptide is Putative imidazole glycerol phosphate synthase subunit hisF2 (hisF2) (Vibrio vulnificus (strain YJ016)).